The sequence spans 147 residues: Putative acetyltransferase BSU40680 (147 aa).

Residues 1–144 (MNVKKITSEQ…PHVLMTKQDD (144 aa)) enclose the N-acetyltransferase domain. Residues 74-76 (ICI) and 115-117 (GFY) each bind CoA.

This sequence belongs to the UPF0039 (ElaA) family.

Could catalyze the transfer of an acetyl group from acetyl coenzyme A (AcCoA) to an acceptor substrate and release both CoA and the acetylated product. The protein is Putative acetyltransferase BSU40680 (yybD) of Bacillus subtilis (strain 168).